The chain runs to 438 residues: MSQANAATKASSDVFFNASLEDIDPEIFGAIRNELGRQRHEIELIASENIVSRAVLEAQGSILTNKYAEGYPGKRYYGGCQYVDVVEELAIERAKKLFGAEFVNVQPNSGSQMNQAVFLALLQPGDTFMGLDLNSGGHLTHGSPVNMSGKWFNVVSYGVRKDDHLLDMDEVARPARENKPKLILAGGTAYSRIWDWKRFREIADEVGAYLMVDMAHIAGLVAGGQHPSPVPHAHVCTTTTHKSLRGPRGGMILTNDADIAKKINSAVFPGLQGGPLMHVIAGKAVAFAEALKPEFKLYAKNVVDNARALAEELKSHGLDIVSGGTDNHLMLVDLRPKNATGKRAEAALGRANITCNKNGIPFDPEKPFVTSGVRLGTPAGTTRGFGVAEFKEIGSLIAEVLDGLKVANSDEGNAAVEQAVKEKVIALTGRFPMYGYQG.

Residues Leu-133 and 137–139 contribute to the (6S)-5,6,7,8-tetrahydrofolate site; that span reads GHL. Position 242 is an N6-(pyridoxal phosphate)lysine (Lys-242).

This sequence belongs to the SHMT family. In terms of assembly, homodimer. It depends on pyridoxal 5'-phosphate as a cofactor.

The protein localises to the cytoplasm. The catalysed reaction is (6R)-5,10-methylene-5,6,7,8-tetrahydrofolate + glycine + H2O = (6S)-5,6,7,8-tetrahydrofolate + L-serine. It functions in the pathway one-carbon metabolism; tetrahydrofolate interconversion. The protein operates within amino-acid biosynthesis; glycine biosynthesis; glycine from L-serine: step 1/1. Its function is as follows. Catalyzes the reversible interconversion of serine and glycine with tetrahydrofolate (THF) serving as the one-carbon carrier. This reaction serves as the major source of one-carbon groups required for the biosynthesis of purines, thymidylate, methionine, and other important biomolecules. Also exhibits THF-independent aldolase activity toward beta-hydroxyamino acids, producing glycine and aldehydes, via a retro-aldol mechanism. The chain is Serine hydroxymethyltransferase from Brucella ovis (strain ATCC 25840 / 63/290 / NCTC 10512).